Consider the following 521-residue polypeptide: Endoplasmic reticulum mannosyl-oligosaccharide 1,2-alpha-mannosidase (521 aa).

Residues 1-8 (MVKRRTVK) are Cytoplasmic-facing. The helical; Signal-anchor for type II membrane protein transmembrane segment at 9-31 (YFLRRILALFVLCVPIYYLYTTV) threads the bilayer. Residues 32–521 (QRPPGYTKLK…IENNMDLYTV (490 aa)) lie on the Lumenal side of the membrane. N-linked (GlcNAc...) asparagine glycans are attached at residues asparagine 114, asparagine 167, asparagine 300, asparagine 342, and asparagine 378. Cysteines 330 and 373 form a disulfide. Glutamate 387 functions as the Proton donor in the catalytic mechanism. Residue asparagine 499 is glycosylated (N-linked (GlcNAc...) asparagine). Residue threonine 504 participates in Ca(2+) binding.

The protein belongs to the glycosyl hydrolase 47 family. The cofactor is Ca(2+).

It is found in the membrane. It carries out the reaction N(4)-(alpha-D-Man-(1-&gt;2)-alpha-D-Man-(1-&gt;2)-alpha-D-Man-(1-&gt;3)-[alpha-D-Man-(1-&gt;2)-alpha-D-Man-(1-&gt;3)-[alpha-D-Man-(1-&gt;2)-alpha-D-Man-(1-&gt;6)]-alpha-D-Man-(1-&gt;6)]-beta-D-Man-(1-&gt;4)-beta-D-GlcNAc-(1-&gt;4)-beta-D-GlcNAc)-L-asparaginyl-[protein] (N-glucan mannose isomer 9A1,2,3B1,2,3) + 4 H2O = N(4)-(alpha-D-Man-(1-&gt;3)-[alpha-D-Man-(1-&gt;3)-[alpha-D-Man-(1-&gt;6)]-alpha-D-Man-(1-&gt;6)]-beta-D-Man-(1-&gt;4)-beta-D-GlcNAc-(1-&gt;4)-beta-D-GlcNAc)-L-asparaginyl-[protein] (N-glucan mannose isomer 5A1,2) + 4 beta-D-mannose. The catalysed reaction is N(4)-(alpha-D-Man-(1-&gt;2)-alpha-D-Man-(1-&gt;2)-alpha-D-Man-(1-&gt;3)-[alpha-D-Man-(1-&gt;3)-[alpha-D-Man-(1-&gt;2)-alpha-D-Man-(1-&gt;6)]-alpha-D-Man-(1-&gt;6)]-beta-D-Man-(1-&gt;4)-beta-D-GlcNAc-(1-&gt;4)-beta-D-GlcNAc)-L-asparaginyl-[protein] (N-glucan mannose isomer 8A1,2,3B1,3) + 3 H2O = N(4)-(alpha-D-Man-(1-&gt;3)-[alpha-D-Man-(1-&gt;3)-[alpha-D-Man-(1-&gt;6)]-alpha-D-Man-(1-&gt;6)]-beta-D-Man-(1-&gt;4)-beta-D-GlcNAc-(1-&gt;4)-beta-D-GlcNAc)-L-asparaginyl-[protein] (N-glucan mannose isomer 5A1,2) + 3 beta-D-mannose. It participates in protein modification; protein glycosylation. With respect to regulation, inhibited by kifunensine. Functionally, involved in glycoprotein quality control as it is important for the targeting of misfolded glycoproteins for degradation. It trims a single alpha-1,2-linked mannose residue from Man(9)GlcNAc(2) to produce Man(8)GlcNAc(2) with low efficiency. The protein is Endoplasmic reticulum mannosyl-oligosaccharide 1,2-alpha-mannosidase of Schizosaccharomyces pombe (strain 972 / ATCC 24843) (Fission yeast).